Here is a 632-residue protein sequence, read N- to C-terminus: Chaperone protein HtpG (632 aa).

The interval 1 to 339 (MAHETMSFQA…SADLPLNVSR (339 aa)) is a; substrate-binding. The b stretch occupies residues 340–559 (EILQESRDVK…DNDMSGYLQR (220 aa)). Positions 560-632 (MLKAAGQNAP…TNALLLSRAA (73 aa)) are c.

It belongs to the heat shock protein 90 family. As to quaternary structure, homodimer.

It localises to the cytoplasm. In terms of biological role, molecular chaperone. Has ATPase activity. The protein is Chaperone protein HtpG of Burkholderia lata (strain ATCC 17760 / DSM 23089 / LMG 22485 / NCIMB 9086 / R18194 / 383).